The following is a 519-amino-acid chain: Flavin-dependent halogenase rdc2 (519 aa).

A signal peptide spans 1–21 (MSVPKSCTILVAGGGPAGSYA). FAD is bound by residues Gly14, Ala17, and Glu47. Chloride-binding residues include Ser324 and Gly325.

Belongs to the flavin-dependent halogenase family.

It functions in the pathway secondary metabolite biosynthesis. In terms of biological role, flavin-dependent halogenase; part of the gene cluster that mediates the biosynthesis of radicicol, a resorcylic acid lactone (RAL) that irreversibly inhibits the HSP90 molecular chaperone, an important target for cancer chemotherapy. Within the cluster, rdc2 is involved in the chlorination of the resorcylic acid lactone (RAL) structure to convert monocillin I into radicicol. Also chlorinates monocillin II to produce 6-cholomonocillin II and monocilllin IV to produce 13-chloromonocillin IV. In contrast to most fungal halogenases, rdc2 has a broad substrate specificity and can accept a variety of macrolactones as the substrates to generate chlorinated derivatives, including dihydroresorcylide, zearalenone, curvularin, or even curcumin. Rdc2 is able to dichlorinate dihydroresorcylide and monocillin IV. Dihydroresorcylide is first chlorinated at position 11 to produce 11-chlorodihydroresorcylide which can be further chlorinated by rdc2 at possition 13. Mororeover, rdc2 can incorporate bromine into dihydroresorcylide to yield the corresponding mono- and di-brominated derivatives. Finally, rdc2 is also able to halogenate the isoquinolines 4-hydroxyisoquinoline and 6-hydroxyisoquinoline into 3-chloro-4-hydroxyisoquinoline and 5-chloro-6-hydroxyisoquinoline, respectively. The radicicol cluster encodes only two apparent post-PKS enzymes, a cytochrome P450 monooxygenase (rdc4) and a non-heme halogenase (rdc2) that could introduce the epoxide and the chlorine, respectively. If this cluster includes all the genes required for radicicol biosynthesis, the remaining structural features of radicicol are presumably generated by the PKSs rdc1 and rdc5. The C-2' ketone could arise if the R-PKS rdc5 and NR-PKS rdc1 each carry out four iterations, in contrast to the five iteration-three iteration split for the hypothemycin PKSs. The origin of the cis 5',6' double bond is not known. The radicicol R-PKS rdc5 ER domain may catalyze either double bond isomerization or reduction in the third iteration. This Metacordyceps chlamydosporia (Nematophagous fungus) protein is Flavin-dependent halogenase rdc2.